A 320-amino-acid chain; its full sequence is Malate dehydrogenase (320 aa).

NAD(+)-binding positions include 10 to 15 (GAGMIG) and Asp-34. Arg-83 and Arg-89 together coordinate substrate. NAD(+) contacts are provided by residues Asn-96 and 119–121 (ITN). 2 residues coordinate substrate: Asn-121 and Arg-152. The Proton acceptor role is filled by His-176.

It belongs to the LDH/MDH superfamily. MDH type 3 family.

The catalysed reaction is (S)-malate + NAD(+) = oxaloacetate + NADH + H(+). Functionally, catalyzes the reversible oxidation of malate to oxaloacetate. The protein is Malate dehydrogenase of Caulobacter vibrioides (strain NA1000 / CB15N) (Caulobacter crescentus).